Here is a 77-residue protein sequence, read N- to C-terminus: Acyl carrier protein (77 aa).

The Carrier domain occupies 2–77; that stretch reads SDIADRVKKI…DAVKFISDAS (76 aa). S37 carries the post-translational modification O-(pantetheine 4'-phosphoryl)serine.

This sequence belongs to the acyl carrier protein (ACP) family. In terms of processing, 4'-phosphopantetheine is transferred from CoA to a specific serine of apo-ACP by AcpS. This modification is essential for activity because fatty acids are bound in thioester linkage to the sulfhydryl of the prosthetic group.

It localises to the cytoplasm. It participates in lipid metabolism; fatty acid biosynthesis. Carrier of the growing fatty acid chain in fatty acid biosynthesis. The chain is Acyl carrier protein from Roseobacter denitrificans (strain ATCC 33942 / OCh 114) (Erythrobacter sp. (strain OCh 114)).